Consider the following 491-residue polypeptide: Rab5 GDP/GTP exchange factor (491 aa).

Residues 1-74 (MSLKSERRGI…EEEAFASSQS (74 aa)) form an interaction with ubiquitinated proteins region. The A20-type zinc-finger motif lies at 13 to 47 (DQSDLLCKKGCGYYGNPAWQGFCSKCWREEYHKAR). Positions 19, 23, 35, and 38 each coordinate Zn(2+). The disordered stretch occupies residues 66 to 85 (EEAFASSQSSQGAQSLTFSK). Residues 69–84 (FASSQSSQGAQSLTFS) show a composition bias toward low complexity. 2 positions are modified to phosphoserine: S124 and S132. N6-acetyllysine is present on residues K151 and K170. One can recognise a VPS9 domain in the interval 232–375 (EKKDLAIQKR…IEKLDAQSLN (144 aa)). Phosphoserine is present on residues S373, S377, S390, and S400. Residues 462–491 (PPNQPLAAIDSENVENDKLPPPLQPQVYAG) form a disordered region.

As to quaternary structure, interacts with RGS14; the interaction is GTP-dependent. Heterodimer with RABEP1. The heterodimer binds RAB4A and RAB5A that have been activated by GTP-binding. Interacts with RAB21, and with 100-fold lower affinity also with RAB22. Binds TSC2, GGA1, GGA2, GGA3, AP1G1 and AP1G2. Interacts with ubiquitinated EGFR. In terms of processing, monoubiquitinated.

It localises to the cytoplasm. Its subcellular location is the early endosome. The protein resides in the recycling endosome. Its function is as follows. Rab effector protein acting as linker between gamma-adaptin, RAB4A or RAB5A. Involved in endocytic membrane fusion and membrane trafficking of recycling endosomes. Stimulates nucleotide exchange on RAB5A. Can act as a ubiquitin ligase. This Homo sapiens (Human) protein is Rab5 GDP/GTP exchange factor (RABGEF1).